The primary structure comprises 316 residues: Pentatricopeptide repeat-containing protein At1g19525 (316 aa).

6 PPR repeats span residues 9–43, 44–78, 79–113, 115–149, 150–184, and 185–219; these read DILT…GLRP, DEKI…ELKA, SEEV…SDGP, SFEA…GHKP, DDKC…GIEI, and GVIT…GEAP.

This sequence belongs to the PPR family. P subfamily.

The sequence is that of Pentatricopeptide repeat-containing protein At1g19525 from Arabidopsis thaliana (Mouse-ear cress).